The primary structure comprises 735 residues: Alpha-adducin (735 aa).

Met1 bears the N-acetylmethionine mark. Positions 1–11 (MNGDTRAAVVT) are enriched in low complexity. The interval 1–21 (MNGDTRAAVVTSPPPTTAPHK) is disordered. The residue at position 12 (Ser12) is a Phosphoserine. Position 59 is a phosphoserine; by PKA (Ser59). Ser64 carries the post-translational modification Phosphoserine. Position 331 is a phosphothreonine (Thr331). A phosphoserine mark is found at Ser334, Ser353, and Ser355. Position 358 is a phosphothreonine (Thr358). Phosphoserine occurs at positions 364 and 366. Ser408 is modified (phosphoserine; by PKA). Disordered stretches follow at residues 418-486 (GHSF…SAVP) and 576-735 (RREV…KSDS). Ser427 bears the Phosphoserine mark. Thr429 is subject to Phosphothreonine. Residue Ser431 is modified to Phosphoserine. At Ser436 the chain carries Phosphoserine; by PKA. A Phosphothreonine; by ROCK2 modification is found at Thr445. Ser464 and Ser465 each carry phosphoserine. A Phosphothreonine; by ROCK2 modification is found at Thr480. Phosphoserine; by PKA is present on Ser481. Residues 576 to 601 (RREVERKQKGSEENLDETREQKEKSP) are compositionally biased toward basic and acidic residues. Phosphoserine occurs at positions 586, 600, and 605. Phosphothreonine is present on Thr610. Phosphoserine is present on Ser613. Thr614 is modified (phosphothreonine). Residues 678 to 712 (EPASASAPGAEEVASPATEEGSPMDPGSDGSPGKS) show a composition bias toward low complexity. Residues Ser705, Ser708, and Ser712 each carry the phosphoserine modification. Residues 713–735 (PSKKKKKFRTPSFLKKSKKKSDS) are compositionally biased toward basic residues. Ser714 carries the phosphoserine; by PKC modification. Residues 715–732 (KKKKKFRTPSFLKKSKKK) form an interaction with calmodulin region. Ser724 carries the phosphoserine; by PKA and PKC modification.

This sequence belongs to the aldolase class II family. Adducin subfamily. Heterodimer of an alpha and a beta subunit or an alpha and a gamma subunit.

The protein resides in the cytoplasm. Its subcellular location is the cytoskeleton. It is found in the cell membrane. Membrane-cytoskeleton-associated protein that promotes the assembly of the spectrin-actin network. Binds to calmodulin. In Rattus norvegicus (Rat), this protein is Alpha-adducin (Add1).